We begin with the raw amino-acid sequence, 282 residues long: Succinate dehydrogenase [ubiquinone] iron-sulfur subunit, mitochondrial (282 aa).

The 89-residue stretch at 43–131 (YRFNPEAPGA…STKIYPLPHM (89 aa)) folds into the 2Fe-2S ferredoxin-type domain. [2Fe-2S] cluster-binding residues include C91, C96, C99, and C111. In terms of domain architecture, 4Fe-4S ferredoxin-type spans 174–204 (ERDRLDGLYECILCACCSTSCPSYWWNADKY). 3 residues coordinate [4Fe-4S] cluster: C184, C187, and C190. A [3Fe-4S] cluster-binding site is contributed by C194. W199 serves as a coordination point for a ubiquinone. 2 residues coordinate [3Fe-4S] cluster: C241 and C247. C251 lines the [4Fe-4S] cluster pocket.

Belongs to the succinate dehydrogenase/fumarate reductase iron-sulfur protein family. In terms of assembly, component of complex II composed of four subunits: a flavoprotein (FP), an iron-sulfur protein (IP), and a cytochrome b composed of a large and a small subunit. [2Fe-2S] cluster is required as a cofactor. Requires [3Fe-4S] cluster as cofactor. [4Fe-4S] cluster serves as cofactor.

Its subcellular location is the mitochondrion inner membrane. It carries out the reaction a quinone + succinate = fumarate + a quinol. It participates in carbohydrate metabolism; tricarboxylic acid cycle; fumarate from succinate (eukaryal route): step 1/1. In terms of biological role, iron-sulfur protein (IP) subunit of succinate dehydrogenase (SDH) that is involved in complex II of the mitochondrial electron transport chain and is responsible for transferring electrons from succinate to ubiquinone (coenzyme Q). The protein is Succinate dehydrogenase [ubiquinone] iron-sulfur subunit, mitochondrial of Caenorhabditis briggsae.